A 281-amino-acid polypeptide reads, in one-letter code: MQEALRLIFSDTRARPSADVEVPGFEADWSAATPSRGLPLTLRNLRKSFGDNSVLRGIDLHIPAGQFVTIVGRSGCGKSTLLRLIAGLDQPTAGNIGFGDDRLPGDVRVMFQEPRLLPWARVLANVEVGLGADRGSPDAKARAEEVLLEVGLTDKRDQWPAVLSGGQKQRVALARALVSRPRVLAFDEPLGALDALTRIAMQQLLERVWRDQGFTAILVTHDVAEAVALADRVLVIEDGRITNDVLIDLPRPRRRGSADLAALEGEILKQLLEGSEDSSEL.

The ABC transporter domain maps to leucine 40–leucine 263. Glycine 72–serine 79 is a binding site for ATP.

This sequence belongs to the ABC transporter superfamily. Aliphatic sulfonates importer (TC 3.A.1.17.2) family. In terms of assembly, the complex is composed of two ATP-binding proteins (SsuB), two transmembrane proteins (SsuC) and a solute-binding protein (SsuA).

It is found in the cell inner membrane. The catalysed reaction is ATP + H2O + aliphatic sulfonate-[sulfonate-binding protein]Side 1 = ADP + phosphate + aliphatic sulfonateSide 2 + [sulfonate-binding protein]Side 1.. Its function is as follows. Part of the ABC transporter complex SsuABC involved in aliphatic sulfonates import. Responsible for energy coupling to the transport system. The polypeptide is Aliphatic sulfonates import ATP-binding protein SsuB (Rhodopseudomonas palustris (strain BisA53)).